The sequence spans 507 residues: E3 ubiquitin-protein ligase TRIM31 (507 aa).

Residues 16–56 (CPICMEILQDPVTIDCGHNFCLQCISQVGKTSEKIQCPLCK) form an RING-type zinc finger. The segment at 89-130 (KEDSRCQRHKEKLHYFCEQDGAFLCVVCRDSKDHKSHNVTLI) adopts a B box-type zinc-finger fold. Residues Cys-94, His-97, Cys-116, and His-122 each coordinate Zn(2+). Coiled coils occupy residues 176-241 (EKLK…LQSS) and 269-298 (EDLEKKCSEAKARHESIIKTLTELKDDMNA). Residues 315–507 (EKESWSLLQK…VACSHITLSP (193 aa)) enclose the B30.2/SPRY domain.

The protein belongs to the TRIM/RBCC family. As to quaternary structure, may form oligomers. Interacts with isoform p52shc of SHC1. Post-translationally, auto-ubiquitinated (in vitro). In terms of tissue distribution, highly expressed in the gastrointestrinal tract, with high expression in the small intestine, moderate in the large intestine and weak in the stomach and esophagus.

It localises to the cytoplasm. Its subcellular location is the mitochondrion. It catalyses the reaction S-ubiquitinyl-[E2 ubiquitin-conjugating enzyme]-L-cysteine + [acceptor protein]-L-lysine = [E2 ubiquitin-conjugating enzyme]-L-cysteine + N(6)-ubiquitinyl-[acceptor protein]-L-lysine.. Its pathway is protein modification; protein ubiquitination. E3 ubiquitin-protein ligase that acts as a regulator of antiviral immune response and inflammation by mediating ubiquitination of substrates. Acts as a regulator of innate immune defense against viruses by mediating 'Lys-63'-linked ubiquitination of MAVS, promoting MAVS polymerization and formation of three-stranded helical filaments on mitochondria. Acts as a negative regulator of the NLRP3 inflammasome by catalyzing 'Lys-48'-linked ubiquitination of NLRP3, leading to its degradation. Regulator of Src-induced anchorage independent cell growth. The chain is E3 ubiquitin-protein ligase TRIM31 from Mus musculus (Mouse).